The chain runs to 406 residues: Argininosuccinate synthase (406 aa).

8–16 (AYSGGLDTS) contributes to the ATP binding site. Tyrosine 86 is a binding site for L-citrulline. Glycine 116 is a binding site for ATP. L-aspartate-binding residues include threonine 118, asparagine 122, and aspartate 123. Asparagine 122 contacts L-citrulline. Positions 126, 174, 259, and 271 each coordinate L-citrulline.

The protein belongs to the argininosuccinate synthase family. Type 1 subfamily. As to quaternary structure, homotetramer.

It is found in the cytoplasm. The catalysed reaction is L-citrulline + L-aspartate + ATP = 2-(N(omega)-L-arginino)succinate + AMP + diphosphate + H(+). It functions in the pathway amino-acid biosynthesis; L-arginine biosynthesis; L-arginine from L-ornithine and carbamoyl phosphate: step 2/3. This Lacticaseibacillus paracasei (strain ATCC 334 / BCRC 17002 / CCUG 31169 / CIP 107868 / KCTC 3260 / NRRL B-441) (Lactobacillus paracasei) protein is Argininosuccinate synthase.